A 339-amino-acid polypeptide reads, in one-letter code: Biotin synthase (339 aa).

A Radical SAM core domain is found at 51–278; sequence SEVELATLLS…KARVRLSAGR (228 aa). Residues cysteine 66, cysteine 70, and cysteine 73 each coordinate [4Fe-4S] cluster. [2Fe-2S] cluster contacts are provided by cysteine 110, cysteine 141, cysteine 201, and arginine 273.

This sequence belongs to the radical SAM superfamily. Biotin synthase family. In terms of assembly, homodimer. [4Fe-4S] cluster is required as a cofactor. It depends on [2Fe-2S] cluster as a cofactor.

The enzyme catalyses (4R,5S)-dethiobiotin + (sulfur carrier)-SH + 2 reduced [2Fe-2S]-[ferredoxin] + 2 S-adenosyl-L-methionine = (sulfur carrier)-H + biotin + 2 5'-deoxyadenosine + 2 L-methionine + 2 oxidized [2Fe-2S]-[ferredoxin]. It functions in the pathway cofactor biosynthesis; biotin biosynthesis; biotin from 7,8-diaminononanoate: step 2/2. Catalyzes the conversion of dethiobiotin (DTB) to biotin by the insertion of a sulfur atom into dethiobiotin via a radical-based mechanism. In Herminiimonas arsenicoxydans, this protein is Biotin synthase.